The following is a 417-amino-acid chain: Gamma-glutamyl phosphate reductase (417 aa).

This sequence belongs to the gamma-glutamyl phosphate reductase family.

Its subcellular location is the cytoplasm. The catalysed reaction is L-glutamate 5-semialdehyde + phosphate + NADP(+) = L-glutamyl 5-phosphate + NADPH + H(+). It participates in amino-acid biosynthesis; L-proline biosynthesis; L-glutamate 5-semialdehyde from L-glutamate: step 2/2. Functionally, catalyzes the NADPH-dependent reduction of L-glutamate 5-phosphate into L-glutamate 5-semialdehyde and phosphate. The product spontaneously undergoes cyclization to form 1-pyrroline-5-carboxylate. This Escherichia coli O7:K1 (strain IAI39 / ExPEC) protein is Gamma-glutamyl phosphate reductase.